Consider the following 434-residue polypeptide: Putative peptidase B (434 aa).

Mn(2+)-binding residues include K198 and D203. Residue K210 is part of the active site. 3 residues coordinate Mn(2+): D221, D280, and E282. The active site involves R284.

This sequence belongs to the peptidase M17 family. As to quaternary structure, homohexamer. The cofactor is Mn(2+).

It is found in the cytoplasm. It carries out the reaction Release of an N-terminal amino acid, Xaa, from a peptide or arylamide. Xaa is preferably Glu or Asp but may be other amino acids, including Leu, Met, His, Cys and Gln.. Probably plays an important role in intracellular peptide degradation. This is Putative peptidase B from Haemophilus influenzae (strain ATCC 51907 / DSM 11121 / KW20 / Rd).